The sequence spans 353 residues: Melanin-concentrating hormone receptor 1 (353 aa).

Residues 1–26 (MDLQTSLLSTGPNASNISDGQDNLTL) are disordered. Residues 1–45 (MDLQTSLLSTGPNASNISDGQDNLTLPGSPPRTGSVSYINIIMPS) lie on the Extracellular side of the membrane. N13, N16, and N23 each carry an N-linked (GlcNAc...) asparagine glycan. Residues 46–66 (VFGTICLLGIVGNSTVIFAVV) traverse the membrane as a helical segment. The Cytoplasmic segment spans residues 67–79 (KKSKLHWCSNVPD). A helical transmembrane segment spans residues 80–100 (IFIINLSVVDLLFLLGMPFMI). Topologically, residues 101–116 (HQLMGNGVWHFGETMC) are extracellular. C116 and C194 are joined by a disulfide. A helical membrane pass occupies residues 117 to 139 (TLITAMDANSQFTSTYILTAMTI). The Cytoplasmic segment spans residues 140 to 161 (DRYLATVHPISSTKFRKPSMAT). Residues 162–182 (LVICLLWALSFISITPVWLYA) form a helical membrane-spanning segment. Residues 183 to 204 (RLIPFPGGAVGCGIRLPNPDTD) lie on the Extracellular side of the membrane. The helical transmembrane segment at 205 to 225 (LYWFTLYQFFLAFALPFVVIT) threads the bilayer. Residues 226–256 (AAYVKILQRMTSSVAPASQRSIRLRTKRVTR) lie on the Cytoplasmic side of the membrane. The helical transmembrane segment at 257-277 (TAIAICLVFFVCWAPYYVLQL) threads the bilayer. The Extracellular portion of the chain corresponds to 278-294 (TQLSISRPTLTFVYLYN). A helical membrane pass occupies residues 295–315 (AAISLGYANSCLNPFVYIVLC). Residues 316 to 353 (ETFRKRLVLSVKPAAQGQLRTVSNAQTADEERTESKGT) lie on the Cytoplasmic side of the membrane.

It belongs to the G-protein coupled receptor 1 family. Interacts with NCDN. As to expression, high level in the brain, moderate amounts in the eye and skeletal muscle, and small amounts in tongue and pituitary.

Its subcellular location is the cell membrane. In terms of biological role, receptor for melanin-concentrating hormone, coupled to G proteins that inhibit adenylyl cyclase. This chain is Melanin-concentrating hormone receptor 1, found in Rattus norvegicus (Rat).